Here is an 829-residue protein sequence, read N- to C-terminus: Exocyst complex component SEC10b (829 aa).

A coiled-coil region spans residues 244–266; sequence RGLEVAVANLQDYCNELENRLLS.

It belongs to the SEC10 family. As to quaternary structure, the exocyst complex is composed of SEC3, SEC5, SEC6, SEC8, SEC10, EXO70A1 and EXO84B. Interacts with EXO84B. Binds to EXO70E2. Expressed in seedlings, roots, leaves and flowers.

It localises to the cytoplasm. The protein localises to the cytosol. The protein resides in the secreted. It is found in the extracellular exosome. Its function is as follows. Component of the exocyst complex involved in the docking of exocytic vesicles with fusion sites on the plasma membrane during regulated or polarized secretion. Involved in polarized cell growth and organ morphogenesis. During cytokinesis, involved in cell plate initiation, cell plate maturation and formation of new primary cell wall. In Arabidopsis thaliana (Mouse-ear cress), this protein is Exocyst complex component SEC10b.